Here is a 257-residue protein sequence, read N- to C-terminus: Pyridoxal phosphate homeostasis protein (257 aa).

Serine 2 is modified (N-acetylserine). The residue at position 49 (lysine 49) is an N6-(pyridoxal phosphate)lysine.

It belongs to the pyridoxal phosphate-binding protein YggS/PROSC family.

Its subcellular location is the cytoplasm. The protein resides in the nucleus. Its function is as follows. Pyridoxal 5'-phosphate (PLP)-binding protein, which may be involved in intracellular homeostatic regulation of pyridoxal 5'-phosphate (PLP), the active form of vitamin B6. In Saccharomyces cerevisiae (strain ATCC 204508 / S288c) (Baker's yeast), this protein is Pyridoxal phosphate homeostasis protein.